The chain runs to 249 residues: MAERGELDLTGAKQNTGVWLVKVPKYLSQQWAKASGRGEVGKLRIAKTQGRTEVSFTLNEDLANIHDIGGKPASVSAPREHPFVLQSVGGQTLTVFTESSSDKLSLEGIVVQRAECRPAASENYMRLKRLQIEESSKPVRLSQQLDKVVTTNYKPVANHQYNIEYERKKKEDGKRARADKQHVLDMLFSAFEKHQYYNLKDLVDITKQPVVYLKEILKEIGVQNVKGIHKNTWELKPEYRHYQGEEKSD.

A2 bears the N-acetylalanine mark. N6-acetyllysine is present on residues K22, K33, and K137. The residue at position 142 (S142) is a Phosphoserine. Positions 227 and 229 each coordinate DNA. Position 248 is a phosphoserine (S248).

This sequence belongs to the TFIIF beta subunit family. Heterodimer of an alpha and a beta subunit. Interacts with HTATSF1 and GPBP1. Interacts with URI1. Interacts with GTF2B (via N-terminus); this interaction is inhibited in presence of GTF2F1. Part of TBP-based Pol II pre-initiation complex (PIC), in which Pol II core assembles with general transcription factors and other specific initiation factors including GTF2E1, GTF2E2, GTF2F1, GTF2F2, TCEA1, ERCC2, ERCC3, GTF2H2, GTF2H3, GTF2H4, GTF2H5, GTF2A1, GTF2A2, GTF2B and TBP; this large multi-subunit PIC complex mediates DNA unwinding and targets Pol II core to the transcription start site where the first phosphodiester bond forms.

It is found in the nucleus. Its function is as follows. TFIIF is a general transcription initiation factor that binds to RNA polymerase II and helps to recruit it to the initiation complex in collaboration with TFIIB. The protein is General transcription factor IIF subunit 2 (GTF2F2) of Homo sapiens (Human).